We begin with the raw amino-acid sequence, 283 residues long: Putative UTP--glucose-1-phosphate uridylyltransferase (283 aa).

Belongs to the UDPGP type 2 family.

It carries out the reaction alpha-D-glucose 1-phosphate + UTP + H(+) = UDP-alpha-D-glucose + diphosphate. The sequence is that of Putative UTP--glucose-1-phosphate uridylyltransferase from Methanocaldococcus jannaschii (strain ATCC 43067 / DSM 2661 / JAL-1 / JCM 10045 / NBRC 100440) (Methanococcus jannaschii).